Consider the following 275-residue polypeptide: NH(3)-dependent NAD(+) synthetase (275 aa).

Residue 46–53 (GISGGQDS) coordinates ATP. Aspartate 52 provides a ligand contact to Mg(2+). Arginine 140 contributes to the deamido-NAD(+) binding site. Threonine 160 serves as a coordination point for ATP. Glutamate 165 contributes to the Mg(2+) binding site. Lysine 173 and aspartate 180 together coordinate deamido-NAD(+). Lysine 189 and threonine 211 together coordinate ATP. 260 to 261 (HK) lines the deamido-NAD(+) pocket.

Belongs to the NAD synthetase family. In terms of assembly, homodimer.

It carries out the reaction deamido-NAD(+) + NH4(+) + ATP = AMP + diphosphate + NAD(+) + H(+). The protein operates within cofactor biosynthesis; NAD(+) biosynthesis; NAD(+) from deamido-NAD(+) (ammonia route): step 1/1. Functionally, catalyzes the ATP-dependent amidation of deamido-NAD to form NAD. Uses ammonia as a nitrogen source. The chain is NH(3)-dependent NAD(+) synthetase from Salmonella heidelberg (strain SL476).